The chain runs to 123 residues: Protein crumbs homolog 3 (123 aa).

An N-terminal signal peptide occupies residues 1 to 26; the sequence is MASPGLGLLLALGLPLLPARWGRAWG. Residues 27–59 lie on the Extracellular side of the membrane; sequence QTLDPHVNENGTITPSAPGSGSNGALSQEAITA. Asn-36 carries N-linked (GlcNAc...) asparagine glycosylation. The chain crosses the membrane as a helical span at residues 60 to 80; the sequence is IIVVFSLLAAVLLAVGLVLLL. Over 81–120 the chain is Cytoplasmic; that stretch reads RKLREKRQTQGTYRPSSEEQFNHAAEARAPQDSKETVRGC. Residues 87–123 are disordered; that stretch reads RQTQGTYRPSSEEQFNHAAEARAPQDSKETVRGCLPI. A compositionally biased stretch (basic and acidic residues) spans 96–117; it reads SSEEQFNHAAEARAPQDSKETV. A PDZ-binding motif is present at residues 119-123; the sequence is GCLPI.

Component of a complex composed of CRB3, PALS1 and PATJ. Interacts (via C-terminus) with PALS1 (via PDZ domain). Interacts with PARD6A. Interacts (via intracellular domain) with EPB41L5. Interacts with WDR83.

It localises to the apical cell membrane. It is found in the cell junction. Its subcellular location is the tight junction. In terms of biological role, involved in the establishment of cell polarity in mammalian epithelial cells. Regulates the morphogenesis of tight junctions. Involved in promoting phosphorylation and cytoplasmic retention of transcriptional coactivators YAP1 and WWTR1/TAZ which leads to suppression of TGFB1-dependent transcription of target genes such as CCN2/CTGF, SERPINE1/PAI1, SNAI1/SNAIL1 and SMAD7. The protein is Protein crumbs homolog 3 of Canis lupus familiaris (Dog).